The sequence spans 527 residues: Peptide chain release factor 3 (527 aa).

The tr-type G domain maps to 9–277 (AKRRTFAIIS…AVVDWAPRPL (269 aa)). Residues 18 to 25 (SHPDAGKT), 86 to 90 (DTPGH), and 140 to 143 (NKLD) each bind GTP.

Belongs to the TRAFAC class translation factor GTPase superfamily. Classic translation factor GTPase family. PrfC subfamily.

Its subcellular location is the cytoplasm. Its function is as follows. Increases the formation of ribosomal termination complexes and stimulates activities of RF-1 and RF-2. It binds guanine nucleotides and has strong preference for UGA stop codons. It may interact directly with the ribosome. The stimulation of RF-1 and RF-2 is significantly reduced by GTP and GDP, but not by GMP. This Pseudomonas entomophila (strain L48) protein is Peptide chain release factor 3.